Reading from the N-terminus, the 288-residue chain is Diaminopimelate epimerase (288 aa).

Residues N14 and N67 each contribute to the substrate site. Residue C76 is the Proton donor of the active site. Substrate is bound by residues 77 to 78 (GN), N166, N199, and 217 to 218 (ER). C226 functions as the Proton acceptor in the catalytic mechanism. 227 to 228 (GT) provides a ligand contact to substrate.

Belongs to the diaminopimelate epimerase family. In terms of assembly, homodimer.

It is found in the cytoplasm. The enzyme catalyses (2S,6S)-2,6-diaminopimelate = meso-2,6-diaminopimelate. It participates in amino-acid biosynthesis; L-lysine biosynthesis via DAP pathway; DL-2,6-diaminopimelate from LL-2,6-diaminopimelate: step 1/1. In terms of biological role, catalyzes the stereoinversion of LL-2,6-diaminopimelate (L,L-DAP) to meso-diaminopimelate (meso-DAP), a precursor of L-lysine and an essential component of the bacterial peptidoglycan. The protein is Diaminopimelate epimerase of Bacillus cereus (strain ATCC 14579 / DSM 31 / CCUG 7414 / JCM 2152 / NBRC 15305 / NCIMB 9373 / NCTC 2599 / NRRL B-3711).